Consider the following 315-residue polypeptide: uncharacterized protein (315 aa).

At 1–38 (MDVLLSLPQPELFKTTVIPFLANRNIIKSEAILSNLHS) the chain is on the cytoplasmic side. The helical transmembrane segment at 39–59 (IFYVAIFYHIWFLFGKWILFP) threads the bilayer. Residues 60 to 101 (HLVKWKLDYDQKHNVKKDEKTTSERQAQHYKKKYTSLINQSS) lie on the Lumenal side of the membrane. Residues 95–302 (SLINQSSVHL…MVSVAAKVLK (208 aa)) form the TLC domain. The chain crosses the membrane as a helical span at residues 102–122 (VHLISLLQSIVVLYYSLKFLL). Residues 123–144 (DPKASAEPYQTSHSRVFTENRD) are Cytoplasmic-facing. The helical transmembrane segment at 145-165 (TQVICIFAIGYFVWDIYISTM) threads the bilayer. The Lumenal portion of the chain corresponds to 166 to 170 (YSTFP). The helical transmembrane segment at 171 to 190 (FVVHGIISTVVFCIGLKPYI) threads the bilayer. The Cytoplasmic segment spans residues 191–225 (QYYAPVFLMFELSNPSLNFRWFGIKFLPQKSKFCS). Residues 226 to 246 (LLLLLNNLTLMVVFFAARIAW) form a helical membrane-spanning segment. Residues 247-264 (GWFQIGKLCYDFYQVRNE) lie on the Lumenal side of the membrane. The chain crosses the membrane as a helical span at residues 265–285 (PGFLVFDTIVILAGNFVLDIL). Residues 286-315 (NVIWFSTMVSVAAKVLKKGESVDKVTKNEQ) are Cytoplasmic-facing.

The protein resides in the endoplasmic reticulum membrane. This is an uncharacterized protein from Saccharomyces cerevisiae (strain ATCC 204508 / S288c) (Baker's yeast).